A 307-amino-acid polypeptide reads, in one-letter code: Urease accessory protein UreD (307 aa).

The protein belongs to the UreD family. As to quaternary structure, ureD, UreF and UreG form a complex that acts as a GTP-hydrolysis-dependent molecular chaperone, activating the urease apoprotein by helping to assemble the nickel containing metallocenter of UreC. The UreE protein probably delivers the nickel.

It is found in the cytoplasm. Required for maturation of urease via the functional incorporation of the urease nickel metallocenter. This is Urease accessory protein UreD from Prochlorococcus marinus (strain NATL1A).